We begin with the raw amino-acid sequence, 488 residues long: Glutamyl-tRNA(Gln) amidotransferase subunit A (488 aa).

Active-site charge relay system residues include Lys-78 and Ser-153. The active-site Acyl-ester intermediate is Ser-177.

Belongs to the amidase family. GatA subfamily. Heterotrimer of A, B and C subunits.

The enzyme catalyses L-glutamyl-tRNA(Gln) + L-glutamine + ATP + H2O = L-glutaminyl-tRNA(Gln) + L-glutamate + ADP + phosphate + H(+). Functionally, allows the formation of correctly charged Gln-tRNA(Gln) through the transamidation of misacylated Glu-tRNA(Gln) in organisms which lack glutaminyl-tRNA synthetase. The reaction takes place in the presence of glutamine and ATP through an activated gamma-phospho-Glu-tRNA(Gln). The chain is Glutamyl-tRNA(Gln) amidotransferase subunit A from Caldanaerobacter subterraneus subsp. tengcongensis (strain DSM 15242 / JCM 11007 / NBRC 100824 / MB4) (Thermoanaerobacter tengcongensis).